We begin with the raw amino-acid sequence, 147 residues long: Leghemoglobin 6 (147 aa).

The 146-residue stretch at 2 to 147 (SFTDKQEALV…LATEIKKAMS (146 aa)) folds into the Globin domain. Nitrated tyrosine is present on residues tyrosine 25 and tyrosine 30. Residue serine 45 participates in heme b binding. Serine 45 carries the post-translational modification Phosphoserine. Histidine 62 serves as a coordination point for O2. Heme b is bound by residues lysine 65, histidine 94, and lysine 97. Tyrosine 135 is modified (nitrated tyrosine).

Belongs to the plant globin family. In terms of assembly, monomer. Nitrated in effective nodules and particularly in hypoxic conditions; this mechanism may play a protective role in the symbiosis by buffering toxic peroxynitrite NO(2)(-). Nitration level decrease during nodule senescence. Post-translationally, phosphorylation at Ser-45 disrupts the molecular environment of its porphyrin ring oxygen binding pocket, thus leading to a reduced oxygen consumption and to the delivery of oxygen O(2) to symbiosomes. Root nodules.

Its subcellular location is the cytoplasm. The protein resides in the cytosol. The protein localises to the nucleus. Its function is as follows. Leghemoglobin that reversibly binds oxygen O(2) through a pentacoordinated heme iron. In root nodules, facilitates the diffusion of oxygen to the bacteroids while preventing the bacterial nitrogenase from being inactivated by buffering dioxygen, nitric oxide and carbon monoxide, and promoting the formation of reactive oxygen species (ROS, e.g. H(2)O(2)). This role is essential for symbiotic nitrogen fixation (SNF). The sequence is that of Leghemoglobin 6 from Medicago truncatula (Barrel medic).